The following is a 220-amino-acid chain: Deoxyribose-phosphate aldolase (220 aa).

The active-site Proton donor/acceptor is the Asp89. Catalysis depends on Lys151, which acts as the Schiff-base intermediate with acetaldehyde. Lys180 (proton donor/acceptor) is an active-site residue.

It belongs to the DeoC/FbaB aldolase family. DeoC type 1 subfamily.

It is found in the cytoplasm. It carries out the reaction 2-deoxy-D-ribose 5-phosphate = D-glyceraldehyde 3-phosphate + acetaldehyde. Its pathway is carbohydrate degradation; 2-deoxy-D-ribose 1-phosphate degradation; D-glyceraldehyde 3-phosphate and acetaldehyde from 2-deoxy-alpha-D-ribose 1-phosphate: step 2/2. Functionally, catalyzes a reversible aldol reaction between acetaldehyde and D-glyceraldehyde 3-phosphate to generate 2-deoxy-D-ribose 5-phosphate. This chain is Deoxyribose-phosphate aldolase, found in Streptococcus mutans serotype c (strain ATCC 700610 / UA159).